The chain runs to 470 residues: 6-phosphofructo-2-kinase/fructose-2,6-bisphosphatase (470 aa).

A 6-phosphofructo-2-kinase region spans residues 1–249; it reads MADRLRELTQ…VYYLMNIHVT (249 aa). Serine 31 bears the Phosphoserine; by PKA mark. 47–55 contacts ATP; sequence GLPARGKTY. Residues arginine 80 and arginine 104 each coordinate beta-D-fructose 6-phosphate. Residue aspartate 130 is part of the active site. Residues threonine 132 and arginine 138 each contribute to the beta-D-fructose 6-phosphate site. Cysteine 160 is an active-site residue. Position 169–174 (169–174) interacts with ATP; it reads NITQVK. Lysine 174, arginine 195, and tyrosine 199 together coordinate beta-D-fructose 6-phosphate. Residues 250–470 form a fructose-2,6-bisphosphatase region; it reads PRSIYLSRHG…EALDTVPEHF (221 aa). Arginine 257 is a beta-D-fructose 2,6-bisphosphate binding site. Histidine 258 acts as the Tele-phosphohistidine intermediate in catalysis. Positions 264 and 270 each coordinate beta-D-fructose 2,6-bisphosphate. Glutamate 327 acts as the Proton donor/acceptor in catalysis. Beta-D-fructose 2,6-bisphosphate contacts are provided by tyrosine 338, arginine 352, lysine 356, tyrosine 367, glutamine 393, and arginine 397. 349–352 is a binding site for ATP; that stretch reads FALR. ATP contacts are provided by residues 393-397 and tyrosine 429; that span reads QAVMR.

It in the C-terminal section; belongs to the phosphoglycerate mutase family. As to quaternary structure, homodimer.

The enzyme catalyses beta-D-fructose 2,6-bisphosphate + H2O = beta-D-fructose 6-phosphate + phosphate. It carries out the reaction beta-D-fructose 6-phosphate + ATP = beta-D-fructose 2,6-bisphosphate + ADP + H(+). With respect to regulation, phosphorylation results in inhibition of the kinase activity. In terms of biological role, synthesis and degradation of fructose 2,6-bisphosphate. The chain is 6-phosphofructo-2-kinase/fructose-2,6-bisphosphatase from Aquarana catesbeiana (American bullfrog).